Here is a 112-residue protein sequence, read N- to C-terminus: Urease subunit beta (112 aa).

It belongs to the urease beta subunit family. As to quaternary structure, heterotrimer of UreA (gamma), UreB (beta) and UreC (alpha) subunits. Three heterotrimers associate to form the active enzyme.

The protein localises to the cytoplasm. The catalysed reaction is urea + 2 H2O + H(+) = hydrogencarbonate + 2 NH4(+). Its pathway is nitrogen metabolism; urea degradation; CO(2) and NH(3) from urea (urease route): step 1/1. The sequence is that of Urease subunit beta from Thioalkalivibrio sulfidiphilus (strain HL-EbGR7).